A 113-amino-acid chain; its full sequence is T cell receptor alpha variable 12-2 (113 aa).

The signal sequence occupies residues 1–20 (MKSLRVLLVILWLQLSWVWS). Residues 23–113 (KEVEQNSGPL…DSATYLCAVN (91 aa)) enclose the Ig-like domain. Asparagine 43 carries N-linked (GlcNAc...) asparagine glycosylation. Residues cysteine 44 and cysteine 110 are joined by a disulfide bond.

Alpha-beta TR is a heterodimer composed of an alpha and beta chain; disulfide-linked. The alpha-beta TR is associated with the transmembrane signaling CD3 coreceptor proteins to form the TR-CD3 (TcR or TCR). The assembly of alpha-beta TR heterodimers with CD3 occurs in the endoplasmic reticulum where a single alpha-beta TR heterodimer associates with one CD3D-CD3E heterodimer, one CD3G-CD3E heterodimer and one CD247 homodimer forming a stable octameric structure. CD3D-CD3E and CD3G-CD3E heterodimers preferentially associate with TR alpha and TR beta chains, respectively. The association of the CD247 homodimer is the last step of TcR assembly in the endoplasmic reticulum and is required for transport to the cell surface.

It is found in the cell membrane. Functionally, v region of the variable domain of T cell receptor (TR) alpha chain that participates in the antigen recognition. Alpha-beta T cell receptors are antigen specific receptors which are essential to the immune response and are present on the cell surface of T lymphocytes. Recognize peptide-major histocompatibility (MH) (pMH) complexes that are displayed by antigen presenting cells (APC), a prerequisite for efficient T cell adaptive immunity against pathogens. Binding of alpha-beta TR to pMH complex initiates TR-CD3 clustering on the cell surface and intracellular activation of LCK that phosphorylates the ITAM motifs of CD3G, CD3D, CD3E and CD247 enabling the recruitment of ZAP70. In turn ZAP70 phosphorylates LAT, which recruits numerous signaling molecules to form the LAT signalosome. The LAT signalosome propagates signal branching to three major signaling pathways, the calcium, the mitogen-activated protein kinase (MAPK) kinase and the nuclear factor NF-kappa-B (NF-kB) pathways, leading to the mobilization of transcription factors that are critical for gene expression and essential for T cell growth and differentiation. The T cell repertoire is generated in the thymus, by V-(D)-J rearrangement. This repertoire is then shaped by intrathymic selection events to generate a peripheral T cell pool of self-MH restricted, non-autoaggressive T cells. Post-thymic interaction of alpha-beta TR with the pMH complexes shapes TR structural and functional avidity. In Homo sapiens (Human), this protein is T cell receptor alpha variable 12-2.